Reading from the N-terminus, the 179-residue chain is Proteasome chaperone 3 (179 aa).

The protein belongs to the PSMG3 family. Component of the 20S proteasome chaperone. Forms a heterodimer with POC4 that binds to proteasome precursors. Interacts with POP2.

In terms of biological role, involved in 20S proteasome assembly, facilitating the alpha-ring formation. In Saccharomyces cerevisiae (strain ATCC 204508 / S288c) (Baker's yeast), this protein is Proteasome chaperone 3 (IRC25).